A 217-amino-acid polypeptide reads, in one-letter code: Large ribosomal subunit protein eL14 (217 aa).

Position 79 is an N6-acetyllysine (K79). K85 bears the N6-acetyllysine; alternate mark. Residue K85 is modified to N6-succinyllysine; alternate. K124 is covalently cross-linked (Glycyl lysine isopeptide (Lys-Gly) (interchain with G-Cter in SUMO2)). Residue S139 is modified to Phosphoserine. A disordered region spans residues 162–217 (KVPAKKATGPGKKAAGQKAPAQKAAGQKAAPPAKGQKGQKTPAQKAPAPKAAGKKA). One copy of the 1-1; approximate repeat lies at 173–177 (KKAAG). Residues 173–192 (KKAAGQKAPAQKAAGQKAAP) are 4 X 5 AA tandem repeats of Q-K-A-[APS]-X. 5 tandem repeats follow at residues 178–182 (QKAPA), 183–187 (QKAAG), 188–192 (QKAAP), 195–197 (KGQ), and 198–200 (KGQ). The segment at 195–200 (KGQKGQ) is 2 X 3 AA tandem repeats of K-G-Q. Position 206 is an N6-succinyllysine (K206).

The protein belongs to the eukaryotic ribosomal protein eL14 family. In terms of assembly, component of the large ribosomal subunit.

The protein resides in the cytoplasm. Its function is as follows. Component of the large ribosomal subunit. The ribosome is a large ribonucleoprotein complex responsible for the synthesis of proteins in the cell. In Mus musculus (Mouse), this protein is Large ribosomal subunit protein eL14 (Rpl14).